The sequence spans 328 residues: Alanine racemase (328 aa).

Lys-33 (proton acceptor; specific for D-alanine) is an active-site residue. The residue at position 33 (Lys-33) is an N6-(pyridoxal phosphate)lysine. Arg-118 provides a ligand contact to substrate. Tyr-237 serves as the catalytic Proton acceptor; specific for L-alanine. Met-283 contacts substrate.

It belongs to the alanine racemase family. The cofactor is pyridoxal 5'-phosphate.

It carries out the reaction L-alanine = D-alanine. It participates in amino-acid biosynthesis; D-alanine biosynthesis; D-alanine from L-alanine: step 1/1. Functionally, catalyzes the interconversion of L-alanine and D-alanine. May also act on other amino acids. The polypeptide is Alanine racemase (alr) (Campylobacter jejuni subsp. doylei (strain ATCC BAA-1458 / RM4099 / 269.97)).